Consider the following 335-residue polypeptide: Holliday junction branch migration complex subunit RuvB (335 aa).

A large ATPase domain (RuvB-L) region spans residues 1–181; it reads MDRIVEIEKY…FGMQFRLEFY (181 aa). Residues Leu-20, Arg-21, Gly-62, Lys-65, Thr-66, Thr-67, 128–130, Arg-171, Tyr-181, and Arg-218 each bind ATP; that span reads EDY. Thr-66 contributes to the Mg(2+) binding site. A small ATPAse domain (RuvB-S) region spans residues 182-252; that stretch reads KDSELALILQ…RANEALNSLG (71 aa). Positions 255-335 are head domain (RuvB-H); the sequence is ELGFDAMDLR…LNYEKTLFEE (81 aa). Positions 309 and 314 each coordinate DNA.

It belongs to the RuvB family. In terms of assembly, homohexamer. Forms an RuvA(8)-RuvB(12)-Holliday junction (HJ) complex. HJ DNA is sandwiched between 2 RuvA tetramers; dsDNA enters through RuvA and exits via RuvB. An RuvB hexamer assembles on each DNA strand where it exits the tetramer. Each RuvB hexamer is contacted by two RuvA subunits (via domain III) on 2 adjacent RuvB subunits; this complex drives branch migration. In the full resolvosome a probable DNA-RuvA(4)-RuvB(12)-RuvC(2) complex forms which resolves the HJ.

Its subcellular location is the cytoplasm. The enzyme catalyses ATP + H2O = ADP + phosphate + H(+). In terms of biological role, the RuvA-RuvB-RuvC complex processes Holliday junction (HJ) DNA during genetic recombination and DNA repair, while the RuvA-RuvB complex plays an important role in the rescue of blocked DNA replication forks via replication fork reversal (RFR). RuvA specifically binds to HJ cruciform DNA, conferring on it an open structure. The RuvB hexamer acts as an ATP-dependent pump, pulling dsDNA into and through the RuvAB complex. RuvB forms 2 homohexamers on either side of HJ DNA bound by 1 or 2 RuvA tetramers; 4 subunits per hexamer contact DNA at a time. Coordinated motions by a converter formed by DNA-disengaged RuvB subunits stimulates ATP hydrolysis and nucleotide exchange. Immobilization of the converter enables RuvB to convert the ATP-contained energy into a lever motion, pulling 2 nucleotides of DNA out of the RuvA tetramer per ATP hydrolyzed, thus driving DNA branch migration. The RuvB motors rotate together with the DNA substrate, which together with the progressing nucleotide cycle form the mechanistic basis for DNA recombination by continuous HJ branch migration. Branch migration allows RuvC to scan DNA until it finds its consensus sequence, where it cleaves and resolves cruciform DNA. The protein is Holliday junction branch migration complex subunit RuvB of Campylobacter jejuni subsp. doylei (strain ATCC BAA-1458 / RM4099 / 269.97).